The primary structure comprises 687 residues: Acetolactate synthase catalytic subunit, mitochondrial (687 aa).

The transit peptide at 1–90 directs the protein to the mitochondrion; it reads MIRQSTLKNF…AEPDMDTSFV (90 aa). A compositionally biased stretch (low complexity) spans 43-52; the sequence is YYSASPLPAS. The disordered stretch occupies residues 43-68; the sequence is YYSASPLPASKRPEPAPSFNVDPLEQ. Glu-139 lines the thiamine diphosphate pocket. Residues Arg-241, 355–376, and 407–426 each bind FAD; these read HGCATANLAVQNADLIIAVGAR and EVSPKNINKVVQTQIAVEGD. Residues 499-579 form a thiamine pyrophosphate binding region; sequence QHQMWAAQHW…VKILILNNEE (81 aa). Residues Asp-550, Asn-577, and Glu-579 each coordinate Mg(2+).

This sequence belongs to the TPP enzyme family. Homodimer. The acetolactate synthase complex contains the catalytic subunit ILV2 and the regulatory small subunit ILV6. Requires Mg(2+) as cofactor. Thiamine diphosphate serves as cofactor.

Its subcellular location is the mitochondrion. The catalysed reaction is 2 pyruvate + H(+) = (2S)-2-acetolactate + CO2. The enzyme catalyses 2-oxobutanoate + pyruvate + H(+) = (S)-2-ethyl-2-hydroxy-3-oxobutanoate + CO2. It functions in the pathway amino-acid biosynthesis; L-isoleucine biosynthesis; L-isoleucine from 2-oxobutanoate: step 1/4. The protein operates within amino-acid biosynthesis; L-valine biosynthesis; L-valine from pyruvate: step 1/4. With respect to regulation, the regulatory subunit ILV6 stimulates enzymatic activity seven- to tenfold and confers sensitivity to inhibition by valine and activation by ATP. Catalytic subunit of mitochondrial acetolactate synthase, which catalyzes the first of a series of common steps in the biosynthesis of the branched-chain amino acids. Catalyzes the irreversible decarboxylation of pyruvate to a bound hydroxyethyl group that then condenses with either a second pyruvate molecule to form 2-acetolactate (AL) or with 2-ketobutyrate to form 2-aceto-2-hydroxybutyrate (AHB). The first product is the precursor for valine and leucine biosynthesis, while the second leads to isoleucine. The polypeptide is Acetolactate synthase catalytic subunit, mitochondrial (ILV2) (Saccharomyces cerevisiae (strain ATCC 204508 / S288c) (Baker's yeast)).